We begin with the raw amino-acid sequence, 356 residues long: Protein RecA (356 aa).

67-74 (GPESSGKT) is an ATP binding site.

This sequence belongs to the RecA family.

It is found in the cytoplasm. Can catalyze the hydrolysis of ATP in the presence of single-stranded DNA, the ATP-dependent uptake of single-stranded DNA by duplex DNA, and the ATP-dependent hybridization of homologous single-stranded DNAs. It interacts with LexA causing its activation and leading to its autocatalytic cleavage. This Yersinia pestis (strain Pestoides F) protein is Protein RecA.